The sequence spans 146 residues: MNTFALLSVFIQACLVQSVFSQCTSRAAVAADRGIIGGYGFGAPCGLAGGYGLEAPYGWAGYADYGYPAGAYGIDAYGGIGEGNVAVAGELPVAGTTAVAGQVPIMGAVKFGGDVCAAGSVSIAGKCACGCGDYGYGYGLGAPYLY.

Residues 1–21 (MNTFALLSVFIQACLVQSVFS) form the signal peptide.

This sequence belongs to the chorion protein family.

In terms of biological role, this protein is one of many from the eggshell of the gypsy moth. The sequence is that of Chorion class A protein Ld3/Ld29 from Lymantria dispar (Gypsy moth).